The sequence spans 429 residues: 4-hydroxyphenylacetate degradation bifunctional isomerase/decarboxylase (429 aa).

2 Approximate repeats span residues 1–215 (MKGT…RKSF) and 216–429 (PTLP…ETAK). Glu276, Glu278, and Asp307 together coordinate a divalent metal cation.

The protein belongs to the FAH family. In terms of assembly, monomer. The cofactor is Mg(2+).

It catalyses the reaction (2E,4Z)-5-hydroxypenta-2,4-diene-1,2,5-tricarboxylate = (3E,5R)-5-carboxy-2-oxohept-3-enedioate. It carries out the reaction (3E,5R)-5-carboxy-2-oxohept-3-enedioate + H(+) = (4Z)-2-oxohept-4-enedioate + CO2. Its pathway is aromatic compound metabolism; 4-hydroxyphenylacetate degradation; pyruvate and succinate semialdehyde from 4-hydroxyphenylacetate: step 4/7. It functions in the pathway aromatic compound metabolism; 4-hydroxyphenylacetate degradation; pyruvate and succinate semialdehyde from 4-hydroxyphenylacetate: step 5/7. Its function is as follows. Decarboxylates OPET (5-oxo-pent-3-ene-1,2,5-tricarboxylic acid) into HHDD (2-hydroxy-hept-2,4-diene-1,7-dioate) and isomerizes it to OHED (2-oxo-hept-3-ene-1,7-dioate). The chain is 4-hydroxyphenylacetate degradation bifunctional isomerase/decarboxylase (hpaG) from Escherichia coli.